Consider the following 230-residue polypeptide: Urease accessory protein UreF (230 aa).

It belongs to the UreF family. UreD, UreF and UreG form a complex that acts as a GTP-hydrolysis-dependent molecular chaperone, activating the urease apoprotein by helping to assemble the nickel containing metallocenter of UreC. The UreE protein probably delivers the nickel.

The protein resides in the cytoplasm. Its function is as follows. Required for maturation of urease via the functional incorporation of the urease nickel metallocenter. In Marinomonas sp. (strain MWYL1), this protein is Urease accessory protein UreF.